The primary structure comprises 110 residues: Insulin-2 (110 aa).

Residues 1–24 (MALWMRFLPLLALLFLWESHPTQA) form the signal peptide. 3 disulfide bridges follow: cysteine 31–cysteine 96, cysteine 43–cysteine 109, and cysteine 95–cysteine 100. Positions 57-87 (EVEDPQVAQLELGGGPGAGDLQTLALEVAQQ) are cleaved as a propeptide — c peptide.

Belongs to the insulin family. As to quaternary structure, heterodimer of a B chain and an A chain linked by two disulfide bonds.

The protein localises to the secreted. Insulin decreases blood glucose concentration. It increases cell permeability to monosaccharides, amino acids and fatty acids. It accelerates glycolysis, the pentose phosphate cycle, and glycogen synthesis in liver. In Mus musculus (Mouse), this protein is Insulin-2 (Ins2).